Here is a 209-residue protein sequence, read N- to C-terminus: Large ribosomal subunit protein uL3 (209 aa).

The disordered stretch occupies residues 128 to 166 (FGGGSRTHGQSDRLRAPGSVGGSSDPSRTFKGTRMAGRM).

The protein belongs to the universal ribosomal protein uL3 family. In terms of assembly, part of the 50S ribosomal subunit. Forms a cluster with proteins L14 and L19.

Functionally, one of the primary rRNA binding proteins, it binds directly near the 3'-end of the 23S rRNA, where it nucleates assembly of the 50S subunit. The sequence is that of Large ribosomal subunit protein uL3 from Chlorobaculum parvum (strain DSM 263 / NCIMB 8327) (Chlorobium vibrioforme subsp. thiosulfatophilum).